The primary structure comprises 638 residues: Protein NSP-INTERACTING KINASE 1 (638 aa).

The signal sequence occupies residues 1-31 (MESTIVMMMMITRSFFCFLGFLCLLCSSVHG). Residues 32-248 (LLSPKGVNFE…AGGSRNHKMA (217 aa)) lie on the Extracellular side of the membrane. 2 N-linked (GlcNAc...) asparagine glycosylation sites follow: N92 and N103. 4 LRR repeats span residues 104–128 (LTNL…IGRL), 130–152 (RLET…VGYL), 153–175 (QSLQ…SLSN), and 177–200 (TQLA…AAKT). N-linked (GlcNAc...) asparagine glycosylation is found at N162, N175, N188, N219, and N231. Residues 249-269 (IAVGSSVGTVSLIFIAVGLFL) traverse the membrane as a helical segment. Topologically, residues 270–638 (WWRQRHNQNT…VQAMELSGPR (369 aa)) are cytoplasmic. T309 carries the phosphothreonine modification. The Protein kinase domain occupies 312–593 (FSSKNLLGKG…EGDGLAEKWE (282 aa)). 318-326 (LGKGGYGNV) lines the ATP pocket. T335 bears the Phosphothreonine mark. K340 contacts ATP. Phosphoserine occurs at positions 393 and 396. The tract at residues 422–502 (YLHEQCDPKI…DVFGFGILLL (81 aa)) is interaction with geminivirus NSP protein. D435 functions as the Proton acceptor in the catalytic mechanism. Phosphothreonine is present on residues T468, T469, and T474. Y482 carries the phosphotyrosine modification. S484 carries the phosphoserine modification. Residue T485 is modified to Phosphothreonine. At S489 the chain carries Phosphoserine. T566 is modified (phosphothreonine).

Belongs to the protein kinase superfamily. Ser/Thr protein kinase family. As to quaternary structure, oligomer. Interacts with geminivirus nuclear shuttle protein (NSP). Interacts with RPL10A and RPL18B. In terms of processing, autophosphorylated. In terms of tissue distribution, expressed in seedlings, leaves, roots, stems and flowers.

The protein localises to the cell membrane. The enzyme catalyses L-seryl-[protein] + ATP = O-phospho-L-seryl-[protein] + ADP + H(+). It catalyses the reaction L-threonyl-[protein] + ATP = O-phospho-L-threonyl-[protein] + ADP + H(+). Inhibited by the viral nuclear shuttle protein (NSP) that binds to the region required for oligomerization. Its function is as follows. Involved in defense response to geminivirus and begomovirus infection via regulation of the nuclear trafficking of RPL10A. Phosphorylates RPL10A in vitro. Activation of NIK1 down-regulates cytosolic translation. The protein is Protein NSP-INTERACTING KINASE 1 of Arabidopsis thaliana (Mouse-ear cress).